A 250-amino-acid polypeptide reads, in one-letter code: MFMALRAPMLERMNGLHTDDAPVNWLERRGGRLTSRRRVTLLHAGVEHPMRLWGVQSEAITAAMVLSRKVSAIIAGHCGVRLVDQGVGDGFVAAFAHASDAVACALELHQAPLSPIVLRIGIHTGEAQLVDERIYAGATMNLAAELRDLAHGGQTVMSGATEDAVLGRLPMRAWLIGLRPMEGSPEGHNFPQSQRIAQLCHPNLRNTFPPLRMRIADASGIPYVGRILVNVQVVPHWEGGCAAAGMVLAG.

It to class-3 of adenylyl cyclases.

This is an uncharacterized protein from Mycobacterium tuberculosis (strain ATCC 25618 / H37Rv).